Reading from the N-terminus, the 207-residue chain is MIGLINGQVQYLMAPTACVMTTSGVGYDIELPLPSFCQLRLNEQASIWTHFHVREDAQLLYGFIDRKERDVFRQLIKINGVGAKMALAMLSAMSAAELKMHVEQDSEDALTRIPGIGKKTAQRLLIELKDKLKNIEVDSSHLEFAMQPAPISAEGSIIAEVEGALISLGYKEREAQQAIKAAKSNGETFADTQSLLKATLQQFQSFK.

The segment at 1–64 is domain I; it reads MIGLINGQVQ…EDAQLLYGFI (64 aa). Residues 65-143 form a domain II region; it reads DRKERDVFRQ…NIEVDSSHLE (79 aa). Residues 144-152 form a flexible linker region; the sequence is FAMQPAPIS. The segment at 153–207 is domain III; it reads AEGSIIAEVEGALISLGYKEREAQQAIKAAKSNGETFADTQSLLKATLQQFQSFK.

This sequence belongs to the RuvA family. As to quaternary structure, homotetramer. Forms an RuvA(8)-RuvB(12)-Holliday junction (HJ) complex. HJ DNA is sandwiched between 2 RuvA tetramers; dsDNA enters through RuvA and exits via RuvB. An RuvB hexamer assembles on each DNA strand where it exits the tetramer. Each RuvB hexamer is contacted by two RuvA subunits (via domain III) on 2 adjacent RuvB subunits; this complex drives branch migration. In the full resolvosome a probable DNA-RuvA(4)-RuvB(12)-RuvC(2) complex forms which resolves the HJ.

The protein resides in the cytoplasm. Its function is as follows. The RuvA-RuvB-RuvC complex processes Holliday junction (HJ) DNA during genetic recombination and DNA repair, while the RuvA-RuvB complex plays an important role in the rescue of blocked DNA replication forks via replication fork reversal (RFR). RuvA specifically binds to HJ cruciform DNA, conferring on it an open structure. The RuvB hexamer acts as an ATP-dependent pump, pulling dsDNA into and through the RuvAB complex. HJ branch migration allows RuvC to scan DNA until it finds its consensus sequence, where it cleaves and resolves the cruciform DNA. The protein is Holliday junction branch migration complex subunit RuvA of Psychrobacter cryohalolentis (strain ATCC BAA-1226 / DSM 17306 / VKM B-2378 / K5).